Here is a 436-residue protein sequence, read N- to C-terminus: MANVVVIGAQWGDEGKGKITDLLSRSADVVVRYQGGVNAGHTIVVDDKVLKLHLIPSGILYKNTSCLIGSGTVVDPKILLKEIDMLIDNGIDISGLKISSTSHVTMPYHRILDEAMEADRGSNKIGTTGRGIGPTYADKSQRNGIRIRDLLNNERLKDVIEIPLREKNGLLEKIYGIKPLKLEDILEEYLDYGERLSKHVVDCTRTIHAASKNKKNILFEGAQGTLLDLDHGTYPFVTSSNPISGGACIGAGVGPTLIDRVIGVAKAYTTRVGEGPFPTELQGSINDQLCDRGSEFGTTTGRRRRCGWFDGVIGKYAVSVNGLDCLAVTKLDVLDELDEIQVCIAYDLDGEEIDYFPTNSDDLKKCKPIFKKLKGWQCSTADCRKLSDLPQNAMNYLRFLAELMEVPIAIVSLGANRDQTIVIEDPIHGPKRALLR.

GTP-binding positions include 12–18 (GDEGKGK) and 40–42 (GHT). The active-site Proton acceptor is the Asp13. Residues Asp13 and Gly40 each coordinate Mg(2+). IMP is bound by residues 13 to 16 (DEGK), 38 to 41 (NAGH), Thr128, Arg142, Gln223, Thr238, and Arg302. Residue His41 is the Proton donor of the active site. Substrate is bound at residue 298–304 (TTTGRRR). GTP-binding positions include Arg304, 330–332 (KLD), and 412–414 (SLG).

It belongs to the adenylosuccinate synthetase family. As to quaternary structure, homodimer. Mg(2+) serves as cofactor.

Its subcellular location is the cytoplasm. The enzyme catalyses IMP + L-aspartate + GTP = N(6)-(1,2-dicarboxyethyl)-AMP + GDP + phosphate + 2 H(+). The protein operates within purine metabolism; AMP biosynthesis via de novo pathway; AMP from IMP: step 1/2. Its function is as follows. Plays an important role in the de novo pathway of purine nucleotide biosynthesis. Catalyzes the first committed step in the biosynthesis of AMP from IMP. This Prochlorococcus marinus (strain MIT 9215) protein is Adenylosuccinate synthetase.